A 476-amino-acid chain; its full sequence is Bifunctional protein HldE (476 aa).

A ribokinase region spans residues 1–318 (MKPILPDYNN…AEAIHGSRDT (318 aa)). 195-198 (NMSE) is a binding site for ATP. The active site involves aspartate 264. Residues 344–476 (MTNGCFDILH…IIDAIKGGRG (133 aa)) are cytidylyltransferase.

This sequence in the N-terminal section; belongs to the carbohydrate kinase PfkB family. The protein in the C-terminal section; belongs to the cytidylyltransferase family. As to quaternary structure, homodimer.

The enzyme catalyses D-glycero-beta-D-manno-heptose 7-phosphate + ATP = D-glycero-beta-D-manno-heptose 1,7-bisphosphate + ADP + H(+). The catalysed reaction is D-glycero-beta-D-manno-heptose 1-phosphate + ATP + H(+) = ADP-D-glycero-beta-D-manno-heptose + diphosphate. Its pathway is nucleotide-sugar biosynthesis; ADP-L-glycero-beta-D-manno-heptose biosynthesis; ADP-L-glycero-beta-D-manno-heptose from D-glycero-beta-D-manno-heptose 7-phosphate: step 1/4. It functions in the pathway nucleotide-sugar biosynthesis; ADP-L-glycero-beta-D-manno-heptose biosynthesis; ADP-L-glycero-beta-D-manno-heptose from D-glycero-beta-D-manno-heptose 7-phosphate: step 3/4. The protein operates within bacterial outer membrane biogenesis; LPS core biosynthesis. Its function is as follows. Catalyzes the phosphorylation of D-glycero-D-manno-heptose 7-phosphate at the C-1 position to selectively form D-glycero-beta-D-manno-heptose-1,7-bisphosphate. In terms of biological role, catalyzes the ADP transfer from ATP to D-glycero-beta-D-manno-heptose 1-phosphate, yielding ADP-D-glycero-beta-D-manno-heptose. The protein is Bifunctional protein HldE of Vibrio vulnificus (strain CMCP6).